The chain runs to 426 residues: Lipoyl synthase, mitochondrial (426 aa).

A mitochondrion-targeting transit peptide spans 1–29 (MASPAPLQRLQAPLRRSLARAAVLSSRTY). Residues 27–42 (RTYATIPSPSDPGLTQ) show a composition bias toward polar residues. Residues 27-61 (RTYATIPSPSDPGLTQSSPSPAASTTPAKKAPRPS) form a disordered region. Low complexity predominate over residues 43-55 (SSPSPAASTTPAK). 7 residues coordinate [4Fe-4S] cluster: C140, C145, C151, C171, C175, C178, and S388. The Radical SAM core domain maps to 154 to 377 (GNDKSAATAT…KQRALDMGFL (224 aa)).

The protein belongs to the radical SAM superfamily. Lipoyl synthase family. The cofactor is [4Fe-4S] cluster.

The protein localises to the mitochondrion. The catalysed reaction is [[Fe-S] cluster scaffold protein carrying a second [4Fe-4S](2+) cluster] + N(6)-octanoyl-L-lysyl-[protein] + 2 oxidized [2Fe-2S]-[ferredoxin] + 2 S-adenosyl-L-methionine + 4 H(+) = [[Fe-S] cluster scaffold protein] + N(6)-[(R)-dihydrolipoyl]-L-lysyl-[protein] + 4 Fe(3+) + 2 hydrogen sulfide + 2 5'-deoxyadenosine + 2 L-methionine + 2 reduced [2Fe-2S]-[ferredoxin]. It participates in protein modification; protein lipoylation via endogenous pathway; protein N(6)-(lipoyl)lysine from octanoyl-[acyl-carrier-protein]: step 2/2. Functionally, catalyzes the radical-mediated insertion of two sulfur atoms into the C-6 and C-8 positions of the octanoyl moiety bound to the lipoyl domains of lipoate-dependent enzymes, thereby converting the octanoylated domains into lipoylated derivatives. This is Lipoyl synthase, mitochondrial from Podospora anserina (strain S / ATCC MYA-4624 / DSM 980 / FGSC 10383) (Pleurage anserina).